A 421-amino-acid polypeptide reads, in one-letter code: Gamma-glutamyl phosphate reductase (421 aa).

The protein belongs to the gamma-glutamyl phosphate reductase family.

The protein localises to the cytoplasm. The enzyme catalyses L-glutamate 5-semialdehyde + phosphate + NADP(+) = L-glutamyl 5-phosphate + NADPH + H(+). Its pathway is amino-acid biosynthesis; L-proline biosynthesis; L-glutamate 5-semialdehyde from L-glutamate: step 2/2. Functionally, catalyzes the NADPH-dependent reduction of L-glutamate 5-phosphate into L-glutamate 5-semialdehyde and phosphate. The product spontaneously undergoes cyclization to form 1-pyrroline-5-carboxylate. In Pseudomonas aeruginosa (strain LESB58), this protein is Gamma-glutamyl phosphate reductase.